Here is a 158-residue protein sequence, read N- to C-terminus: MKLNEIKDNEGSTHSRKRLGRGIGSGSGKTGGRGVKGQKSRSGVAINGFEGGQMPIYRRLPKRGFNNIFASDFVVVSLARIQTAIDAGKLDAKTTVDAAALKAAGVIRRVKDGVRVLADGEIKAKITIVVAGASKPAVEKIEKAGGTVTLLSAPAAAE.

The segment covering 1–13 (MKLNEIKDNEGST) has biased composition (basic and acidic residues). A disordered region spans residues 1 to 45 (MKLNEIKDNEGSTHSRKRLGRGIGSGSGKTGGRGVKGQKSRSGVA). The segment covering 21–35 (RGIGSGSGKTGGRGV) has biased composition (gly residues).

This sequence belongs to the universal ribosomal protein uL15 family. Part of the 50S ribosomal subunit.

Its function is as follows. Binds to the 23S rRNA. The polypeptide is Large ribosomal subunit protein uL15 (Rhizobium johnstonii (strain DSM 114642 / LMG 32736 / 3841) (Rhizobium leguminosarum bv. viciae)).